Reading from the N-terminus, the 338-residue chain is Nucleoid-associated protein VSAL_I1059 (338 aa).

A disordered region spans residues 319–338; the sequence is KGTPPNLKDQLTRRLGSSES.

It belongs to the YejK family.

Its subcellular location is the cytoplasm. The protein resides in the nucleoid. The sequence is that of Nucleoid-associated protein VSAL_I1059 from Aliivibrio salmonicida (strain LFI1238) (Vibrio salmonicida (strain LFI1238)).